We begin with the raw amino-acid sequence, 153 residues long: Putative pre-16S rRNA nuclease (153 aa).

This sequence belongs to the YqgF nuclease family.

The protein resides in the cytoplasm. In terms of biological role, could be a nuclease involved in processing of the 5'-end of pre-16S rRNA. The chain is Putative pre-16S rRNA nuclease from Prochlorococcus marinus (strain MIT 9301).